The chain runs to 159 residues: MLLLLLGIIVLHVAVLVLLFVATIVSQWIVGNGHATDLWQNCSTTSGNVQHCLSSSANEWLQSVQATMILSIIFSVLSLFLFFCQLFTLTKGGRFYITGIFQILAGLCVMSAASIYTVRHPEWHLDSAYSYGFAYILAWVAFPLALLSGVVYVILRKRE.

M1 is a topological domain (cytoplasmic). Residues 2–31 traverse the membrane as a helical segment; it reads LLLLLGIIVLHVAVLVLLFVATIVSQWIVG. Over 32–64 the chain is Extracellular; that stretch reads NGHATDLWQNCSTTSGNVQHCLSSSANEWLQSV. An N-linked (GlcNAc...) asparagine glycan is attached at N41. A helical transmembrane segment spans residues 65-91; the sequence is QATMILSIIFSVLSLFLFFCQLFTLTK. Residues 92 to 95 lie on the Cytoplasmic side of the membrane; sequence GGRF. Residues 96–119 traverse the membrane as a helical segment; the sequence is YITGIFQILAGLCVMSAASIYTVR. The Extracellular segment spans residues 120-133; the sequence is HPEWHLDSAYSYGF. Residues 134–156 traverse the membrane as a helical segment; the sequence is AYILAWVAFPLALLSGVVYVILR. Topologically, residues 157–159 are cytoplasmic; sequence KRE.

It belongs to the PMP-22/EMP/MP20 family. Post-translationally, ubiquitinated by the DCX(DCAF13) E3 ubiquitin ligase complex, leading to its degradation.

Its subcellular location is the cell membrane. In terms of biological role, might be involved in growth regulation, and in myelinization in the peripheral nervous system. This chain is Peripheral myelin protein 22 (PMP22), found in Equus caballus (Horse).